The primary structure comprises 546 residues: CTP synthase (546 aa).

Residues 1–266 (MTTRYIFVTG…DQLVTKRFGI (266 aa)) are amidoligase domain. Residue Ser-14 participates in CTP binding. Ser-14 is a UTP binding site. Residues 15–20 (SLGKGI) and Asp-72 contribute to the ATP site. Residues Asp-72 and Glu-140 each contribute to the Mg(2+) site. Residues 147 to 149 (DIE), 187 to 192 (KTKPTQ), and Lys-223 contribute to the CTP site. UTP is bound by residues 187-192 (KTKPTQ) and Lys-223. 239–241 (KDV) contributes to the ATP binding site. The Glutamine amidotransferase type-1 domain occupies 291 to 542 (TIGMVGKYIE…VAAAAAYQKR (252 aa)). Gly-352 contacts L-glutamine. Residue Cys-379 is the Nucleophile; for glutamine hydrolysis of the active site. L-glutamine-binding positions include 380 to 383 (LGMQ), Glu-403, and Arg-470. Catalysis depends on residues His-515 and Glu-517.

Belongs to the CTP synthase family. Homotetramer.

The enzyme catalyses UTP + L-glutamine + ATP + H2O = CTP + L-glutamate + ADP + phosphate + 2 H(+). It catalyses the reaction L-glutamine + H2O = L-glutamate + NH4(+). It carries out the reaction UTP + NH4(+) + ATP = CTP + ADP + phosphate + 2 H(+). It functions in the pathway pyrimidine metabolism; CTP biosynthesis via de novo pathway; CTP from UDP: step 2/2. With respect to regulation, allosterically activated by GTP, when glutamine is the substrate; GTP has no effect on the reaction when ammonia is the substrate. The allosteric effector GTP functions by stabilizing the protein conformation that binds the tetrahedral intermediate(s) formed during glutamine hydrolysis. Inhibited by the product CTP, via allosteric rather than competitive inhibition. In terms of biological role, catalyzes the ATP-dependent amination of UTP to CTP with either L-glutamine or ammonia as the source of nitrogen. Regulates intracellular CTP levels through interactions with the four ribonucleotide triphosphates. The chain is CTP synthase from Shewanella pealeana (strain ATCC 700345 / ANG-SQ1).